Consider the following 395-residue polypeptide: Bifunctional enzyme IspD/IspF (395 aa).

A 2-C-methyl-D-erythritol 4-phosphate cytidylyltransferase region spans residues 1–237; that stretch reads MRTWVLLLAA…DANEPQVTVP (237 aa). The tract at residues 238-395 is 2-C-methyl-D-erythritol 2,4-cyclodiphosphate synthase; it reads CVGWGYDVHR…AAVTGLRPMP (158 aa). Residues D244 and H246 each coordinate a divalent metal cation. 4-CDP-2-C-methyl-D-erythritol 2-phosphate is bound by residues 244–246 and 270–271; these read DVH and HS. Position 278 (H278) interacts with a divalent metal cation. Residues 292–294, 297–301, 368–371, and F375 each bind 4-CDP-2-C-methyl-D-erythritol 2-phosphate; these read DIG, FPDSD, and TTEE.

In the N-terminal section; belongs to the IspD/TarI cytidylyltransferase family. IspD subfamily. The protein in the C-terminal section; belongs to the IspF family. The cofactor is a divalent metal cation.

The catalysed reaction is 2-C-methyl-D-erythritol 4-phosphate + CTP + H(+) = 4-CDP-2-C-methyl-D-erythritol + diphosphate. It carries out the reaction 4-CDP-2-C-methyl-D-erythritol 2-phosphate = 2-C-methyl-D-erythritol 2,4-cyclic diphosphate + CMP. It functions in the pathway isoprenoid biosynthesis; isopentenyl diphosphate biosynthesis via DXP pathway; isopentenyl diphosphate from 1-deoxy-D-xylulose 5-phosphate: step 2/6. It participates in isoprenoid biosynthesis; isopentenyl diphosphate biosynthesis via DXP pathway; isopentenyl diphosphate from 1-deoxy-D-xylulose 5-phosphate: step 4/6. Bifunctional enzyme that catalyzes the formation of 4-diphosphocytidyl-2-C-methyl-D-erythritol from CTP and 2-C-methyl-D-erythritol 4-phosphate (MEP) (IspD), and catalyzes the conversion of 4-diphosphocytidyl-2-C-methyl-D-erythritol 2-phosphate (CDP-ME2P) to 2-C-methyl-D-erythritol 2,4-cyclodiphosphate (ME-CPP) with a corresponding release of cytidine 5-monophosphate (CMP) (IspF). The sequence is that of Bifunctional enzyme IspD/IspF from Nitratidesulfovibrio vulgaris (strain ATCC 29579 / DSM 644 / CCUG 34227 / NCIMB 8303 / VKM B-1760 / Hildenborough) (Desulfovibrio vulgaris).